A 95-amino-acid polypeptide reads, in one-letter code: uncharacterized protein (95 aa).

Residues Ile12–Ile32 traverse the membrane as a helical segment.

The protein resides in the cell membrane. This is an uncharacterized protein from Escherichia coli O157:H7.